We begin with the raw amino-acid sequence, 3912 residues long: Chondramide synthase cmdD (3912 aa).

In terms of domain architecture, Carrier 1 spans 1411 to 1485; it reads APRNAREETL…ALAEVASASK (75 aa). S1446 bears the O-(pantetheine 4'-phosphoryl)serine mark. Over residues 1995 to 2029 the composition is skewed to acidic residues; that stretch reads ADEDDEEDDELDEEFDAEVDEEDEDEEEEEDDDGE. Residues 1995-2030 are disordered; it reads ADEDDEEDDELDEEFDAEVDEEDEDEEEEEDDDGEN. One can recognise a Carrier 2 domain in the interval 2989-3064; sequence APRTATEETL…VLARVIDEAL (76 aa). S3024 carries the O-(pantetheine 4'-phosphoryl)serine modification.

Belongs to the ATP-dependent AMP-binding enzyme family. The cofactor is pantetheine 4'-phosphate.

In terms of biological role, involved in the synthesis of chondramides. Activates R-beta-tyrosine and probably phenylalanine. The sequence is that of Chondramide synthase cmdD from Chondromyces crocatus.